We begin with the raw amino-acid sequence, 483 residues long: 3-isopropylmalate dehydratase large subunit (483 aa).

Positions 361, 424, and 427 each coordinate [4Fe-4S] cluster.

This sequence belongs to the aconitase/IPM isomerase family. LeuC type 1 subfamily. As to quaternary structure, heterodimer of LeuC and LeuD. [4Fe-4S] cluster serves as cofactor.

The enzyme catalyses (2R,3S)-3-isopropylmalate = (2S)-2-isopropylmalate. The protein operates within amino-acid biosynthesis; L-leucine biosynthesis; L-leucine from 3-methyl-2-oxobutanoate: step 2/4. Catalyzes the isomerization between 2-isopropylmalate and 3-isopropylmalate, via the formation of 2-isopropylmaleate. The protein is 3-isopropylmalate dehydratase large subunit of Polaromonas naphthalenivorans (strain CJ2).